The following is a 601-amino-acid chain: MKHSASESKPLSSGLAIYRRLLRYGFPYWRSFCVAVVAMIAYAAITPFFAKLIQPLIDGSFIDNDPTVLRQVSLMLIGLSVLRGIAGFLSEYCSGSVGRRVIADLRRDIFDQLLNLPCSFYDNASGGQLLSKLLYNTEQVSASLQQGIITCIREGFTVIGLMALMVYQNPVLSLVFLVLGPVLGLSVRFVSKRFRRLSMRIQESMGKVSHVTQEVIDAQRIVKVFNGKDYEAAKFATENDRNQKRQMKLIATDALGGGVIHLISVAGVAGILYVVSLDSVRQTITPGSLMAFIAAMAMMLSPIRRLSQVVSVMQRGIAAGDSIFAMLDLPRERDRGRISLKRARGSIEYRHVSLVYDDRHGAAVDDVSLVIPAGKTVALVGQSGSGKTSLVRLLPRLYEATAGEILIDGHDIRELTLESLRRQIAYVGQEVTLFNDTVASNIAYGCLDRVGLDAVREAARAANALDFIETLPQGFDTLVGQQGIVLSGGQRQRIAIARALLKNAPILILDEATSALDAESERYVQQALEVLMQNRTTLVIAHRLSTIQNADQICVMRGGRIIECGTHAQLMAARGGYADLYAMQFGYSSVPEAVAVHAVRR.

A run of 5 helical transmembrane segments spans residues 33–53 (CVAV…AKLI), 72–92 (VSLM…LSEY), 158–178 (VIGL…VFLV), 255–275 (LGGG…LYVV), and 283–303 (TITP…LSPI). The region spanning 34 to 315 (VAVVAMIAYA…LSQVVSVMQR (282 aa)) is the ABC transmembrane type-1 domain. The ABC transporter domain occupies 347-583 (IEYRHVSLVY…RGGYADLYAM (237 aa)). 381–388 (GQSGSGKT) is a binding site for ATP.

Belongs to the ABC transporter superfamily. Lipid exporter (TC 3.A.1.106) family. Homodimer.

The protein localises to the cell inner membrane. The enzyme catalyses ATP + H2O + lipid A-core oligosaccharideSide 1 = ADP + phosphate + lipid A-core oligosaccharideSide 2.. Its function is as follows. Involved in lipopolysaccharide (LPS) biosynthesis. Translocates lipid A-core from the inner to the outer leaflet of the inner membrane. Transmembrane domains (TMD) form a pore in the inner membrane and the ATP-binding domain (NBD) is responsible for energy generation. The polypeptide is ATP-dependent lipid A-core flippase (Methylococcus capsulatus (strain ATCC 33009 / NCIMB 11132 / Bath)).